The following is a 276-amino-acid chain: 2,3,4,5-tetrahydropyridine-2,6-dicarboxylate N-succinyltransferase (276 aa).

2 residues coordinate substrate: R107 and D144.

This sequence belongs to the transferase hexapeptide repeat family. Homotrimer.

The protein resides in the cytoplasm. The enzyme catalyses (S)-2,3,4,5-tetrahydrodipicolinate + succinyl-CoA + H2O = (S)-2-succinylamino-6-oxoheptanedioate + CoA. It participates in amino-acid biosynthesis; L-lysine biosynthesis via DAP pathway; LL-2,6-diaminopimelate from (S)-tetrahydrodipicolinate (succinylase route): step 1/3. The protein is 2,3,4,5-tetrahydropyridine-2,6-dicarboxylate N-succinyltransferase of Gluconobacter oxydans (strain 621H) (Gluconobacter suboxydans).